The primary structure comprises 276 residues: 4-hydroxy-tetrahydrodipicolinate reductase (276 aa).

NAD(+) contacts are provided by residues 10–15, Asp-36, and 109–111; these read GALGKM and GTT. His-165 functions as the Proton donor/acceptor in the catalytic mechanism. His-166 serves as a coordination point for (S)-2,3,4,5-tetrahydrodipicolinate. The active-site Proton donor is Lys-169. 175 to 176 provides a ligand contact to (S)-2,3,4,5-tetrahydrodipicolinate; sequence GT.

The protein belongs to the DapB family.

It localises to the cytoplasm. The catalysed reaction is (S)-2,3,4,5-tetrahydrodipicolinate + NAD(+) + H2O = (2S,4S)-4-hydroxy-2,3,4,5-tetrahydrodipicolinate + NADH + H(+). The enzyme catalyses (S)-2,3,4,5-tetrahydrodipicolinate + NADP(+) + H2O = (2S,4S)-4-hydroxy-2,3,4,5-tetrahydrodipicolinate + NADPH + H(+). It participates in amino-acid biosynthesis; L-lysine biosynthesis via DAP pathway; (S)-tetrahydrodipicolinate from L-aspartate: step 4/4. Functionally, catalyzes the conversion of 4-hydroxy-tetrahydrodipicolinate (HTPA) to tetrahydrodipicolinate. This is 4-hydroxy-tetrahydrodipicolinate reductase from Prochlorococcus marinus (strain SARG / CCMP1375 / SS120).